The sequence spans 164 residues: Translation initiation factor IF-3 (164 aa).

It belongs to the IF-3 family. As to quaternary structure, monomer.

Its subcellular location is the cytoplasm. Its function is as follows. IF-3 binds to the 30S ribosomal subunit and shifts the equilibrium between 70S ribosomes and their 50S and 30S subunits in favor of the free subunits, thus enhancing the availability of 30S subunits on which protein synthesis initiation begins. This Bordetella bronchiseptica (strain ATCC BAA-588 / NCTC 13252 / RB50) (Alcaligenes bronchisepticus) protein is Translation initiation factor IF-3.